Here is a 104-residue protein sequence, read N- to C-terminus: UPF0213 protein YsiG (104 aa).

Residues 2 to 79 (NQYFTYILQC…KLVRKQKLSL (78 aa)) form the GIY-YIG domain.

This sequence belongs to the UPF0213 family.

In Lactococcus lactis subsp. lactis (strain IL1403) (Streptococcus lactis), this protein is UPF0213 protein YsiG (ysiG).